A 175-amino-acid polypeptide reads, in one-letter code: Translation initiation factor IF-3 (175 aa).

It belongs to the IF-3 family. In terms of assembly, monomer.

Its subcellular location is the cytoplasm. IF-3 binds to the 30S ribosomal subunit and shifts the equilibrium between 70S ribosomes and their 50S and 30S subunits in favor of the free subunits, thus enhancing the availability of 30S subunits on which protein synthesis initiation begins. This chain is Translation initiation factor IF-3, found in Chromobacterium violaceum (strain ATCC 12472 / DSM 30191 / JCM 1249 / CCUG 213 / NBRC 12614 / NCIMB 9131 / NCTC 9757 / MK).